Here is a 196-residue protein sequence, read N- to C-terminus: Imidazole glycerol phosphate synthase subunit HisH (196 aa).

The 195-residue stretch at 2 to 196 (NIVIIDTNCS…QQLVKNFLEI (195 aa)) folds into the Glutamine amidotransferase type-1 domain. Cysteine 77 acts as the Nucleophile in catalysis. Active-site residues include histidine 178 and glutamate 180.

In terms of assembly, heterodimer of HisH and HisF.

Its subcellular location is the cytoplasm. It catalyses the reaction 5-[(5-phospho-1-deoxy-D-ribulos-1-ylimino)methylamino]-1-(5-phospho-beta-D-ribosyl)imidazole-4-carboxamide + L-glutamine = D-erythro-1-(imidazol-4-yl)glycerol 3-phosphate + 5-amino-1-(5-phospho-beta-D-ribosyl)imidazole-4-carboxamide + L-glutamate + H(+). The catalysed reaction is L-glutamine + H2O = L-glutamate + NH4(+). It participates in amino-acid biosynthesis; L-histidine biosynthesis; L-histidine from 5-phospho-alpha-D-ribose 1-diphosphate: step 5/9. Its function is as follows. IGPS catalyzes the conversion of PRFAR and glutamine to IGP, AICAR and glutamate. The HisH subunit catalyzes the hydrolysis of glutamine to glutamate and ammonia as part of the synthesis of IGP and AICAR. The resulting ammonia molecule is channeled to the active site of HisF. In Blochmanniella pennsylvanica (strain BPEN), this protein is Imidazole glycerol phosphate synthase subunit HisH.